The chain runs to 102 residues: Small ribosomal subunit protein uS10 (102 aa).

This sequence belongs to the universal ribosomal protein uS10 family. As to quaternary structure, part of the 30S ribosomal subunit.

Its function is as follows. Involved in the binding of tRNA to the ribosomes. The sequence is that of Small ribosomal subunit protein uS10 from Lacticaseibacillus casei (strain BL23) (Lactobacillus casei).